Here is a 284-residue protein sequence, read N- to C-terminus: Tryptophan synthase alpha chain (284 aa).

Catalysis depends on proton acceptor residues Glu55 and Asp66.

The protein belongs to the TrpA family. As to quaternary structure, tetramer of two alpha and two beta chains.

The enzyme catalyses (1S,2R)-1-C-(indol-3-yl)glycerol 3-phosphate + L-serine = D-glyceraldehyde 3-phosphate + L-tryptophan + H2O. It participates in amino-acid biosynthesis; L-tryptophan biosynthesis; L-tryptophan from chorismate: step 5/5. In terms of biological role, the alpha subunit is responsible for the aldol cleavage of indoleglycerol phosphate to indole and glyceraldehyde 3-phosphate. The polypeptide is Tryptophan synthase alpha chain (Methanococcus voltae).